Consider the following 377-residue polypeptide: Pseudouridylate synthase RPUSD4, mitochondrial (377 aa).

Residues 1–15 (MAAPRWSASGPWIRG) constitute a mitochondrion transit peptide. A coiled-coil region spans residues 36–62 (AASTAINAQRLAEKLRAQKREQDTKKE). Asp-153 is an active-site residue.

This sequence belongs to the pseudouridine synthase RluA family. Interacts with 16S mt-rRNA, mt-tRNA(Phe) and mt-tRNA(Met). Forms a regulatory protein-RNA complex, consisting of RCC1L, NGRN, RPUSD3, RPUSD4, TRUB2, FASTKD2 and 16S mt-rRNA.

The protein localises to the mitochondrion matrix. It is found in the nucleus. Its subcellular location is the cytoplasm. It carries out the reaction uridine in 5S rRNA = pseudouridine in 5S rRNA. It catalyses the reaction a uridine in tRNA = a pseudouridine in tRNA. The enzyme catalyses a uridine in mRNA = a pseudouridine in mRNA. In terms of biological role, catalyzes uridine to pseudouridine isomerization (pseudouridylation) of different mitochondrial RNA substrates. Acts on position 1397 in 16S mitochondrial ribosomal RNA (16S mt-rRNA). This modification is required for the assembly of 16S mt-rRNA into a functional mitochondrial ribosome. As a component of a functional protein-RNA module, consisting of RCC1L, NGRN, RPUSD3, RPUSD4, TRUB2, FASTKD2 and 16S mt-rRNA, controls 16S mt-rRNA abundance and is required for intra-mitochondrial translation. Acts on position 39 in mitochondrial tRNA(Phe). Also catalyzes pseudouridylation of mRNAs in nucleus: acts as a regulator of pre-mRNA splicing by mediating pseudouridylation of pre-mRNAs at locations associated with alternatively spliced regions. Pseudouridylation of pre-mRNAs near splice sites directly regulates mRNA splicing and mRNA 3'-end processing. The polypeptide is Pseudouridylate synthase RPUSD4, mitochondrial (Homo sapiens (Human)).